The primary structure comprises 351 residues: Nicotinate-nucleotide--dimethylbenzimidazole phosphoribosyltransferase (351 aa).

Residue glutamate 319 is the Proton acceptor of the active site.

Belongs to the CobT family.

The catalysed reaction is 5,6-dimethylbenzimidazole + nicotinate beta-D-ribonucleotide = alpha-ribazole 5'-phosphate + nicotinate + H(+). It functions in the pathway nucleoside biosynthesis; alpha-ribazole biosynthesis; alpha-ribazole from 5,6-dimethylbenzimidazole: step 1/2. In terms of biological role, catalyzes the synthesis of alpha-ribazole-5'-phosphate from nicotinate mononucleotide (NAMN) and 5,6-dimethylbenzimidazole (DMB). This Desulforamulus reducens (strain ATCC BAA-1160 / DSM 100696 / MI-1) (Desulfotomaculum reducens) protein is Nicotinate-nucleotide--dimethylbenzimidazole phosphoribosyltransferase.